The primary structure comprises 306 residues: Recombination-associated protein RdgC (306 aa).

Belongs to the RdgC family.

The protein localises to the cytoplasm. The protein resides in the nucleoid. Functionally, may be involved in recombination. In Pseudomonas entomophila (strain L48), this protein is Recombination-associated protein RdgC.